The primary structure comprises 551 residues: Cytosolic Fe-S cluster assembly factor NAR1 (551 aa).

The [4Fe-4S] cluster site is built by cysteine 20, cysteine 57, cysteine 60, cysteine 63, cysteine 178, and cysteine 242. Residues 395–435 (DPSGHKKRSVRRVAALRSRGRKDSSSEDSTGTPSAISNALG) are disordered. A compositionally biased stretch (polar residues) spans 421-431 (EDSTGTPSAIS). Cysteine 451 contacts [4Fe-4S] cluster.

It belongs to the NARF family.

Functionally, component of the cytosolic Fe/S protein assembly machinery. Required for maturation of extramitochondrial Fe/S proteins. May play a role in the transfer of pre-assembled Fe/S clusters to target apoproteins. The protein is Cytosolic Fe-S cluster assembly factor NAR1 (NAR1) of Candida glabrata (strain ATCC 2001 / BCRC 20586 / JCM 3761 / NBRC 0622 / NRRL Y-65 / CBS 138) (Yeast).